Here is a 338-residue protein sequence, read N- to C-terminus: MNLNRFERYPLTFGPSPITPLKRLSEHLGGKVELYAKREDCNSGLAFGGNKTRKLEYLIPEAIEQGCDTLVSIGGIQSNQTRQVAAVAAHLGMKCVLVQENWVNYSDAVYDRVGNIEMSRIMGADVRLDAAGFDIGIRPSWEKAMSDVVERGGKPFPIPAGCSEHPYGGLGFVGFAEEVRQQEKELGFKFDYIVVCSVTGSTQAGMVVGFAADGRSKNVIGVDASAKPEQTKAQILRIARHTAELVELGREITEEDVVLDTRFAYPEYGLPNEGTLEAIRLCGSLEGVLTDPVYEGKSMHGMIEMVRRGEFPDGSKVLYAHLGGAPALNAYSFLFRNG.

The residue at position 51 (lysine 51) is an N6-(pyridoxal phosphate)lysine. Catalysis depends on serine 78, which acts as the Nucleophile.

Belongs to the ACC deaminase/D-cysteine desulfhydrase family. As to quaternary structure, homotrimer. It depends on pyridoxal 5'-phosphate as a cofactor.

The enzyme catalyses 1-aminocyclopropane-1-carboxylate + H2O = 2-oxobutanoate + NH4(+). In terms of biological role, catalyzes a cyclopropane ring-opening reaction, the irreversible conversion of 1-aminocyclopropane-1-carboxylate (ACC) to ammonia and alpha-ketobutyrate. Allows growth on ACC as a nitrogen source. The polypeptide is 1-aminocyclopropane-1-carboxylate deaminase (Pseudomonas putida (Arthrobacter siderocapsulatus)).